A 364-amino-acid polypeptide reads, in one-letter code: Lipid-A-disaccharide synthase (364 aa).

The protein belongs to the LpxB family.

The catalysed reaction is a lipid X + a UDP-2-N,3-O-bis[(3R)-3-hydroxyacyl]-alpha-D-glucosamine = a lipid A disaccharide + UDP + H(+). It functions in the pathway bacterial outer membrane biogenesis; LPS lipid A biosynthesis. Condensation of UDP-2,3-diacylglucosamine and 2,3-diacylglucosamine-1-phosphate to form lipid A disaccharide, a precursor of lipid A, a phosphorylated glycolipid that anchors the lipopolysaccharide to the outer membrane of the cell. In Campylobacter jejuni (strain RM1221), this protein is Lipid-A-disaccharide synthase.